The sequence spans 351 residues: Methylxanthine N1-demethylase NdmA (351 aa).

In terms of domain architecture, Rieske spans 17-125 (WHPVCTVTEL…CEERYGLIWI (109 aa)). Residues C62, H64, C81, and H84 each coordinate [2Fe-2S] cluster.

[2Fe-2S] cluster is required as a cofactor.

The enzyme catalyses caffeine + NADH + O2 + H(+) = theobromine + formaldehyde + NAD(+) + H2O. The catalysed reaction is caffeine + NADPH + O2 + H(+) = theobromine + formaldehyde + NADP(+) + H2O. It carries out the reaction theophylline + NADH + O2 + H(+) = 3-methylxanthine + formaldehyde + NAD(+) + H2O. It catalyses the reaction theophylline + NADPH + O2 + H(+) = 3-methylxanthine + formaldehyde + NADP(+) + H2O. The enzyme catalyses 1,7-dimethylxanthine + NADH + O2 + H(+) = 7-methylxanthine + formaldehyde + NAD(+) + H2O. The catalysed reaction is 1,7-dimethylxanthine + NADPH + O2 + H(+) = 7-methylxanthine + formaldehyde + NADP(+) + H2O. Its pathway is alkaloid degradation. In terms of biological role, involved in the caffeine degradation, which is the essential first step for assimilating the carbon and nitrogen in caffeine. Catalyzes the N1-demethylation of caffeine to produce theobromine and formaldehyde. Also catalyzes the N1-demethylation of theophylline, paraxanthine, and 1-methylxanthine to 3-methylxanthine, 7-methylxanthine, and xanthine, respectively. NADH is the preferred substrate. The protein is Methylxanthine N1-demethylase NdmA (ndmA) of Pseudomonas putida (Arthrobacter siderocapsulatus).